Consider the following 336-residue polypeptide: D-erythrose-4-phosphate dehydrogenase (336 aa).

Residues 11–12 and R80 contribute to the NAD(+) site; that span reads RI. Residues 153-155, R199, 212-213, and R235 each bind substrate; these read SCT and TK. The active-site Nucleophile is C154. Position 317 (N317) interacts with NAD(+).

It belongs to the glyceraldehyde-3-phosphate dehydrogenase family. Epd subfamily. Homotetramer.

It localises to the cytoplasm. The catalysed reaction is D-erythrose 4-phosphate + NAD(+) + H2O = 4-phospho-D-erythronate + NADH + 2 H(+). It functions in the pathway cofactor biosynthesis; pyridoxine 5'-phosphate biosynthesis; pyridoxine 5'-phosphate from D-erythrose 4-phosphate: step 1/5. Catalyzes the NAD-dependent conversion of D-erythrose 4-phosphate to 4-phosphoerythronate. The sequence is that of D-erythrose-4-phosphate dehydrogenase from Aeromonas hydrophila subsp. hydrophila (strain ATCC 7966 / DSM 30187 / BCRC 13018 / CCUG 14551 / JCM 1027 / KCTC 2358 / NCIMB 9240 / NCTC 8049).